The chain runs to 902 residues: Histone-lysine N-methyltransferase CLF (902 aa).

A compositionally biased stretch (low complexity) spans 1 to 14; it reads MASEASPSSSATRS. Disordered stretches follow at residues 1-33, 73-107, and 335-522; these read MASEASPSSSATRSEPPKDSPAEERGPASKEVS, SMERGGSCKDGSDLLVKRQRDSPGMKSGIDESNNN, and GKTG…FMGE. Basic and acidic residues-rich tracts occupy residues 15–33 and 78–95; these read EPPKDSPAEERGPASKEVS and GSCKDGSDLLVKRQRDSP. Positions 337–357 are enriched in polar residues; that stretch reads TGTSSDGAGTKTTPTKFSSKL. The span at 394 to 403 shows a compositional bias: low complexity; that stretch reads DKVSSSPKVK. Basic residues predominate over residues 404-416; sequence GSGRRVGRKRNKN. Low complexity predominate over residues 438 to 449; that stretch reads SDSIASGSCSPS. Residues 459-473 are compositionally biased toward polar residues; the sequence is ATSSSQKHVKSGNSG. Positions 531 to 581 constitute an SANT domain; that stretch reads TNKLWRPLEKSLFDKGVEIFGMNSCLIARNLLSGFKSCWEVFQYMTCSENK. A CXC domain is found at 638–737; that stretch reads RKRITEKKDQ…SLGVPSQRGD (100 aa). Positions 752-867 constitute an SET domain; sequence QRVLLGISDV…AGEELFYDYR (116 aa). Tyrosine 866 contributes to the S-adenosyl-L-methionine binding site. Basic and acidic residues predominate over residues 875–890; it reads AWAKKPEAPGSKKDEN. Positions 875-902 are disordered; that stretch reads AWAKKPEAPGSKKDENVTPSVGRPKKLA.

It belongs to the class V-like SAM-binding methyltransferase superfamily. Histone-lysine methyltransferase family. EZ subfamily. As to quaternary structure, probable component of a PcG complex. In plants, PcG complexes are probably composed of a member of the EZ family (CLF or MEA), FIE, and a member of the VEFS family (FIS2, VRN2 or EMF2). Interacts with FIE. Interacts with RING1A. Binds to ALP1. Interacts with BLI. Binds to ATX1 in the nucleus. Interacts with EOL1. Interacts (via SANT domain) with HXK1 in the nucleus. In terms of tissue distribution, strongly expressed throughout the apical meristem, leaf primordia, and leaves of 7-8 day-old seedling. Weakly expressed in the vasculature of hypocotyl. Strongly expressed throughout the young stages 1 and 2 floral meristems that arose on the flanks of the apex. In stage 3 and 4 flowers, it is expressed in the emerging sepal primordia and in the dome of the floral meristem. During stages 6 and 7, it is strongly expressed in developing petal and stamen, and weakly expressed in the sepals. Late in floral development, at stage 12, it is weakly expressed in all floral whorls, and expressed at intermediate level in petals and ovules.

The protein localises to the nucleus. It carries out the reaction L-lysyl-[histone] + S-adenosyl-L-methionine = N(6)-methyl-L-lysyl-[histone] + S-adenosyl-L-homocysteine + H(+). Its function is as follows. Polycomb group (PcG) protein. Catalytic subunit of some PcG multiprotein complex, which methylates 'Lys-27' of histone H3, leading to transcriptional repression of the affected target genes, mainly abscisic acid (ABA) responsive elements. Required to regulate floral development by repressing the AGAMOUS homeotic gene in leaves, inflorescence stems and flowers. Together with ATX1, modulates AG nucleosome methylation statement. Regulates the antero-posterior organization of the endosperm, as well as the division and elongation rates of leaf cells. PcG proteins act by forming multiprotein complexes, which are required to maintain the transcriptionally repressive state of homeotic genes throughout development. PcG proteins are not required to initiate repression, but to maintain it during later stages of development. Forms a nuclear complex with EZA1/SWN and HXK1 to target common glucose-responsive genes and regulate glucose signaling by glucose-mediated gene repression. Affects the recruitment of HXK1 to the target chromatin. This chain is Histone-lysine N-methyltransferase CLF, found in Arabidopsis thaliana (Mouse-ear cress).